We begin with the raw amino-acid sequence, 994 residues long: MATFKRDLTKNVGVEDLIMLTEVSESSLHENLKIRYKEGLIYTSIGPVLVSMNPYKQLGIYGNDQINLYKGKHEFEIPPHIYSIADKAYRALRSEGENQCIIISGESGAGKTEASKYIMQYIASITGSSTEVERVKKTILESNPLLEAFGNAKTLRNNNSSRFGKYMEIQFNLGGDPEGGKITNYLLEKSRVINQTQGERNFHIFYQLLKGSSEEEKKTYNLLSPDQYHYLTRNASNGCFTADGIDDQIGFKQTKNAMKVVGIDEPLQKEIFATLSAILLLGNLSFNKSASGNGSVISDKKLANTIASLMGVDAIVLESSLVSRQISTGQGARISTYSVPQTVEQAMYARDAFAKATYSKLFDFIVRKINQSIEVKTIGKVIGVLDIYGFEIFENNSFEQFCINYVNETLQQIFIDLTLKTEQEEYVQEGITWIPVQYINNKACVDLIEKKPIGILSLLDEECLFPEGNDQTMIDKLNKHFSNHTHYSKVERQKNSQFIINHYAGKVFYNIDGFLDKNRDTLFNDLVTLATSSSCSLLVEIFKYVPPLEVDPEQEKKNRDKFSKNGFANNAAKTFIPTDKKRPITAGFQFKNQVTSLLKSLYSCSPHYVRCIKPNSNMRALEWDQSKCAEQVAYLGLFENLLVRRAGYCYRQTFSKFMRRYYMIGKSTWPKWSGDAEKGVNLLMGELTQEINIKEEVQYGKTKIFIRNPQPLFLLEDKRNKRLNDLATKIGSVWKMYKQRKWYLRTLAAIKIQRTYRGWLLVRECVKLKNQSISIFQNNKERNRQSIKLSKAAFIGDFLSLTRDNYTTATLKREEGPNAVLQLSLNVSKVSRHHKIQKRSLLVTNETIFTITPHKPKKDGSWFAIKRKVPFSAIEKISFSKLSDDFFVIHIINEHDLCLETNKKTVLITLLSNLYSKHLNGKELVFEFKDSIQYRNQKGPSELKFVKVDSIHEKSSNSPQANSPSFTAKAEKNYLKVCVLPGLSSESKSILIEK.

The Myosin motor domain maps to 12–720 (VGVEDLIMLT…PLFLLEDKRN (709 aa)). Residue 105-112 (GESGAGKT) coordinates ATP. An actin-binding region spans residues 574 to 654 (TFIPTDKKRP…RAGYCYRQTF (81 aa)). IQ domains are found at residues 723 to 744 (LNDL…KWYL) and 745 to 774 (RTLA…QSIS). Residues 782–970 (RNRQSIKLSK…ANSPSFTAKA (189 aa)) form the TH1 domain.

It belongs to the TRAFAC class myosin-kinesin ATPase superfamily. Myosin family. Myosin I heavy chain is single-headed. Dimer of a heavy and a light chain. Inability to self-assemble into filaments.

Functionally, actin-based motor protein, possibly involved in a wide range of motile processes, such as cell movement across a surface, and extension and retraction of pseudopodia or lamellipodia. The protein is Myosin IA heavy chain (myoA) of Dictyostelium discoideum (Social amoeba).